We begin with the raw amino-acid sequence, 396 residues long: Interleukin enhancer-binding factor 2 homolog (396 aa).

The DZF domain maps to 22–379 (KTFVPRHPFD…KKEGDLEEDI (358 aa)). The tract at residues 367–396 (PTDKKEGDLEEDIDMIENENEEEGSDDGAE) is disordered. The span at 374–396 (DLEEDIDMIENENEEEGSDDGAE) shows a compositional bias: acidic residues.

The protein resides in the nucleus. Functionally, may regulate transcription of undefined genes. The protein is Interleukin enhancer-binding factor 2 homolog of Drosophila melanogaster (Fruit fly).